Reading from the N-terminus, the 288-residue chain is 33 kDa chaperonin (288 aa).

Cystine bridges form between Cys236/Cys238 and Cys269/Cys272.

It belongs to the HSP33 family. Under oxidizing conditions two disulfide bonds are formed involving the reactive cysteines. Under reducing conditions zinc is bound to the reactive cysteines and the protein is inactive.

Its subcellular location is the cytoplasm. In terms of biological role, redox regulated molecular chaperone. Protects both thermally unfolding and oxidatively damaged proteins from irreversible aggregation. Plays an important role in the bacterial defense system toward oxidative stress. The chain is 33 kDa chaperonin from Syntrophotalea carbinolica (strain DSM 2380 / NBRC 103641 / GraBd1) (Pelobacter carbinolicus).